Consider the following 132-residue polypeptide: Global transcriptional regulator Spx (132 aa).

The cysteines at positions 10 and 13 are disulfide-linked.

This sequence belongs to the ArsC family. Spx subfamily. In terms of assembly, interacts with the C-terminal domain of the alpha subunit of the RNAP.

Its subcellular location is the cytoplasm. Global transcriptional regulator that plays a key role in stress response and exerts either positive or negative regulation of genes. Acts by interacting with the C-terminal domain of the alpha subunit of the RNA polymerase (RNAP). This interaction can enhance binding of RNAP to the promoter region of target genes and stimulate their transcription, or block interaction of RNAP with activator. This chain is Global transcriptional regulator Spx, found in Lactiplantibacillus plantarum (strain ATCC BAA-793 / NCIMB 8826 / WCFS1) (Lactobacillus plantarum).